The chain runs to 290 residues: Enoyl-CoA hydratase, mitochondrial (290 aa).

The transit peptide at Met1–Phe27 directs the protein to the mitochondrion. Thr46 carries the phosphothreonine modification. Substrate is bound at residue Ala98–Lys101. Lys101 bears the N6-acetyllysine; alternate mark. Lys101 carries the post-translational modification N6-succinyllysine; alternate. Ser114 bears the Phosphoserine mark. Lys115 carries the N6-acetyllysine; alternate modification. Lys115 carries the post-translational modification N6-succinyllysine; alternate. The residue at position 118 (Lys118) is an N6-acetyllysine. Residue Gly141 participates in substrate binding. Lys204 is subject to N6-succinyllysine. N6-acetyllysine is present on Lys211.

It belongs to the enoyl-CoA hydratase/isomerase family. In terms of assembly, homohexamer; dimer of trimers. As to expression, liver, fibroblast, muscle. Barely detectable in spleen and kidney.

It localises to the mitochondrion matrix. It carries out the reaction a (3S)-3-hydroxyacyl-CoA = a (2E)-enoyl-CoA + H2O. The catalysed reaction is a (3E)-enoyl-CoA = a 4-saturated (2E)-enoyl-CoA. The enzyme catalyses (3E)-hexenoyl-CoA = (2E)-hexenoyl-CoA. It catalyses the reaction (3S)-3-hydroxybutanoyl-CoA = (2E)-butenoyl-CoA + H2O. It carries out the reaction 3-hydroxyisovaleryl-CoA = 3-methylbut-2-enoyl-CoA + H2O. The catalysed reaction is 3-hydroxypropanoyl-CoA = acryloyl-CoA + H2O. The enzyme catalyses 3-hydroxybutanoyl-CoA = (2E)-butenoyl-CoA + H2O. It catalyses the reaction 2-methylpropenoyl-CoA + H2O = (S)-3-hydroxyisobutanoyl-CoA. It carries out the reaction (3S)-hydroxyhexanoyl-CoA = (2E)-hexenoyl-CoA + H2O. The catalysed reaction is (3S)-hydroxydecanoyl-CoA = (2E)-decenoyl-CoA + H2O. Its pathway is lipid metabolism; fatty acid beta-oxidation. Converts unsaturated trans-2-enoyl-CoA species ((2E)-enoyl-CoA) to the corresponding (3S)-3hydroxyacyl-CoA species through addition of a water molecule to the double bond. Catalyzes the hydration of medium- and short-chained fatty enoyl-CoA thioesters from 4 carbons long (C4) up to C16. Has high substrate specificity for crotonyl-CoA ((2E)-butenoyl-CoA) and moderate specificity for acryloyl-CoA, 3-methylcrotonyl-CoA (3-methyl-(2E)-butenoyl-CoA) and methacrylyl-CoA ((2E)-2-methylpropenoyl-CoA). Can bind tiglyl-CoA (2-methylcrotonoyl-CoA), but hydrates only a small amount of this substrate. Plays a key role in the beta-oxidation spiral of short- and medium-chain fatty acid oxidation. At a lower rate than the hydratase reaction, catalyzes the isomerase reaction of trans-3-enoyl-CoA species (such as (3E)-hexenoyl-CoA) to trans-2-enoyl-CoA species (such as (2E)-hexenoyl-CoA), which are subsequently hydrated to 3(S)-3-hydroxyacyl-CoA species (such as (3S)-hydroxyhexanoyl-CoA). The chain is Enoyl-CoA hydratase, mitochondrial from Homo sapiens (Human).